The chain runs to 271 residues: D-methionine-binding lipoprotein MetQ (271 aa).

Residues 1–22 form the signal peptide; it reads MAFKFKTFAAVGALIGSLALAG. Cysteine 23 is lipidated: N-palmitoyl cysteine. The S-diacylglycerol cysteine moiety is linked to residue cysteine 23.

This sequence belongs to the NlpA lipoprotein family.

It localises to the cell membrane. In terms of biological role, this protein is a component of a D-methionine permease, a binding protein-dependent, ATP-driven transport system. In Salmonella typhi, this protein is D-methionine-binding lipoprotein MetQ (metQ).